Reading from the N-terminus, the 768-residue chain is Vacuolar basic amino acid transporter 4 (768 aa).

At 1–252 the chain is on the cytoplasmic side; sequence MGKKDRQRKK…HDLTRRRIFS (252 aa). A coiled-coil region spans residues 9–40; that stretch reads KKLREFAKLKNRQRNLRKSVQTLKNEVQREAK. The interval 34-172 is disordered; sequence EVQREAKVPR…ELPVSSSNSF (139 aa). S62, S99, and S106 each carry phosphoserine. A compositionally biased stretch (basic and acidic residues) spans 110 to 121; sequence KPADKANEDDLK. Positions 132-159 are enriched in polar residues; the sequence is SALQSSITDFSDRSVSPLQSITSCNTPM. 2 positions are modified to phosphoserine: S160 and S192. The helical transmembrane segment at 253 to 273 threads the bilayer; sequence SCMCTYLFFIAMDSSIILVIA. The Vacuolar segment spans residues 274–282; it reads SKIASEFHE. The helical transmembrane segment at 283–305 threads the bilayer; that stretch reads LWRLSLVISAYLLSNAIGQLVFL. Topologically, residues 306 to 311 are cytoplasmic; it reads KLSLIS. A helical membrane pass occupies residues 312 to 331; sequence SVKLLLCIAQFSFILGGYLS. Topologically, residues 332–334 are vacuolar; the sequence is WSS. The helical transmembrane segment at 335 to 357 threads the bilayer; it reads AHFWTFIFARCVTGFGGGSLIAL. Topologically, residues 358–375 are cytoplasmic; the sequence is KSTIMNRFSQKNDSRYSL. A helical transmembrane segment spans residues 376-396; the sequence is SASMITFAMGVVIGPFMMNLF. At 397 to 406 the chain is on the vacuolar side; it reads DSSHGSGWRN. A helical membrane pass occupies residues 407-427; that stretch reads AFLIPVPFCLVNASIMLADMY. The Cytoplasmic segment spans residues 428 to 447; the sequence is SVKSTLYGRPTPTLWKRFKN. Residues 448–468 form a helical membrane-spanning segment; sequence TLLSPDLYEILTLTLFLLCFV. At 469–481 the chain is on the vacuolar side; sequence QVTSLDLTGLKNN. N480 carries an N-linked (GlcNAc...) asparagine glycan. The helical transmembrane segment at 482 to 502 threads the bilayer; it reads TMIQALLFSVIIVCGILFFLI. Residues 503-522 are Cytoplasmic-facing; it reads ETSDTYMNSVISMSLQGDKR. The chain crosses the membrane as a helical span at residues 523–543; it reads LIWTMIGISFCFAALMCIIPF. The Vacuolar segment spans residues 544-562; the sequence is GTTYFIIVLNLSTLQLAER. N-linked (GlcNAc...) asparagine glycosylation occurs at N553. Residues 563–583 form a helical membrane-spanning segment; it reads LSPFFFSIVLGYFSVSYFWKS. The Cytoplasmic portion of the chain corresponds to 584 to 587; sequence KGQN. The chain crosses the membrane as a helical span at residues 588–608; that stretch reads FLLKFVLSGATLLLYVALMGV. The Vacuolar segment spans residues 609-617; the sequence is SLNLPVWKQ. A helical transmembrane segment spans residues 618 to 638; it reads YICLSLPFLGSSMILTLLSNL. The Cytoplasmic portion of the chain corresponds to 639–653; the sequence is YHEYHEQRKSPISGS. The chain crosses the membrane as a helical span at residues 654–674; sequence IVYCFGAVGGTVGISLGGYVF. Residues 675-734 are Vacuolar-facing; it reads HKTLIKLMHEKVMPFSKQGYLKKDLLKIIKHATESSDWVHESAPKFVFQTLIECYLQACR. Residues 735–755 traverse the membrane as a helical segment; sequence NVFKLSTLFFTITVVAIFIFN. Residues 756-768 lie on the Cytoplasmic side of the membrane; it reads RIHCRSQNCLSLS.

Belongs to the major facilitator superfamily.

It localises to the vacuole membrane. In terms of biological role, transporter required for vacuolar uptake of basic amino acids. In Saccharomyces cerevisiae (strain ATCC 204508 / S288c) (Baker's yeast), this protein is Vacuolar basic amino acid transporter 4 (VBA4).